The primary structure comprises 289 residues: Phycobilisome 39 kDa linker polypeptide, phycocyanin-associated, rod (289 aa).

Residues 2–180 form the PBS-linker domain; the sequence is PITSAASRLG…LYRGYANSDR (179 aa). A disordered region spans residues 213-233; that stretch reads SYLPSKQGTAPSRTFGRSSQG. Residues 216 to 233 show a composition bias toward polar residues; it reads PSKQGTAPSRTFGRSSQG. Residues 236-288 enclose the CpcD-like domain; it reads PRLYRIEVTGISLPRYPKVRRSNKEFIVPYEQLSSTLQQINKLGGKVASITFA.

The protein belongs to the phycobilisome linker protein family.

It localises to the cellular thylakoid membrane. In terms of biological role, rod linker protein, associated with phycocyanin. Linker polypeptides determine the state of aggregation and the location of the disk-shaped phycobiliprotein units within the phycobilisome and modulate their spectroscopic properties in order to mediate a directed and optimal energy transfer. This chain is Phycobilisome 39 kDa linker polypeptide, phycocyanin-associated, rod (cpcI2), found in Microchaete diplosiphon (Fremyella diplosiphon).